Consider the following 195-residue polypeptide: Imidazoleglycerol-phosphate dehydratase (195 aa).

Belongs to the imidazoleglycerol-phosphate dehydratase family.

It localises to the cytoplasm. The enzyme catalyses D-erythro-1-(imidazol-4-yl)glycerol 3-phosphate = 3-(imidazol-4-yl)-2-oxopropyl phosphate + H2O. It functions in the pathway amino-acid biosynthesis; L-histidine biosynthesis; L-histidine from 5-phospho-alpha-D-ribose 1-diphosphate: step 6/9. In Methylorubrum populi (strain ATCC BAA-705 / NCIMB 13946 / BJ001) (Methylobacterium populi), this protein is Imidazoleglycerol-phosphate dehydratase.